The chain runs to 503 residues: D-xylose-proton symporter-like 1 (503 aa).

The tract at residues 1 to 23 (MGFDPENQSISSVGQVVGDSSSG) is disordered. Positions 8–23 (QSISSVGQVVGDSSSG) are enriched in low complexity. 12 helical membrane passes run 51 to 73 (FLFP…CAIM), 95 to 115 (IITS…FSVA), 129 to 149 (FLYL…ILII), 152 to 172 (VTYG…IAET), 190 to 210 (VLGM…ISGW), 213 to 233 (MYAT…WLPA), 305 to 325 (ALTI…PSVL), 346 to 366 (ISIL…IVID), 374 to 394 (LLCG…YYMF), 405 to 425 (ALLL…WLMI), 437 to 457 (GISL…FAFS), and 467 to 487 (ILFC…YYIV).

It belongs to the major facilitator superfamily. Sugar transporter (TC 2.A.1.1) family.

The protein localises to the membrane. This is D-xylose-proton symporter-like 1 from Arabidopsis thaliana (Mouse-ear cress).